We begin with the raw amino-acid sequence, 78 residues long: Large ribosomal subunit protein bL28 (78 aa).

Residues 1-23 (MSRVCQVTGKRPMVGNNRSHAKN) form a disordered region.

This sequence belongs to the bacterial ribosomal protein bL28 family.

The chain is Large ribosomal subunit protein bL28 from Shewanella pealeana (strain ATCC 700345 / ANG-SQ1).